Consider the following 271-residue polypeptide: Cytochrome b termination protein 1 (271 aa).

The protein resides in the mitochondrion. In terms of biological role, involved in 5'-end processing of mitochondrial COB, 15S rRNA, and RPM1 transcript. May also have a role in 3'-end processing of the COB pre-mRNA. The chain is Cytochrome b termination protein 1 (CBT1) from Saccharomyces cerevisiae (strain ATCC 204508 / S288c) (Baker's yeast).